A 299-amino-acid polypeptide reads, in one-letter code: Biphenyl-2,3-diol 1,2-dioxygenase (299 aa).

2 VOC domains span residues 6-121 (ELGY…IFYG) and 146-267 (GIGH…FGWG). 3 residues coordinate Fe cation: H149, H212, and E263.

Belongs to the extradiol ring-cleavage dioxygenase family. Homooctamer. The cofactor is Fe(2+).

It carries out the reaction biphenyl-2,3-diol + O2 = 2-hydroxy-6-oxo-6-phenylhexa-2,4-dienoate + H(+). Its pathway is xenobiotic degradation; biphenyl degradation; 2-hydroxy-2,4-pentadienoate and benzoate from biphenyl: step 3/4. In Sphingomonas paucimobilis (Pseudomonas paucimobilis), this protein is Biphenyl-2,3-diol 1,2-dioxygenase (bphC).